A 137-amino-acid chain; its full sequence is Small ribosomal subunit protein eS19 (137 aa).

Belongs to the eukaryotic ribosomal protein eS19 family. Component of the small ribosomal subunit.

Its subcellular location is the cytoplasm. The protein is Small ribosomal subunit protein eS19 (RPS19) of Encephalitozoon cuniculi (strain GB-M1) (Microsporidian parasite).